The primary structure comprises 143 residues: Transcriptional regulator MraZ (143 aa).

SpoVT-AbrB domains are found at residues 5–47 (EYEH…TLEE) and 76–119 (AIEV…DRET).

The protein belongs to the MraZ family. In terms of assembly, forms oligomers.

The protein resides in the cytoplasm. It localises to the nucleoid. In Staphylococcus haemolyticus (strain JCSC1435), this protein is Transcriptional regulator MraZ.